Reading from the N-terminus, the 163-residue chain is Xanthine-guanine phosphoribosyltransferase (163 aa).

5-phospho-alpha-D-ribose 1-diphosphate is bound by residues 43 to 44 (RG) and 95 to 103 (DDLVDTGGT). Residue Asp-96 coordinates Mg(2+). Guanine is bound by residues Asp-99 and Ile-142. Xanthine is bound by residues Asp-99 and Ile-142. GMP contacts are provided by residues 99 to 103 (DTGGT) and 141 to 142 (WI).

Belongs to the purine/pyrimidine phosphoribosyltransferase family. XGPT subfamily. In terms of assembly, homotetramer. Mg(2+) is required as a cofactor.

It is found in the cell inner membrane. It carries out the reaction GMP + diphosphate = guanine + 5-phospho-alpha-D-ribose 1-diphosphate. It catalyses the reaction XMP + diphosphate = xanthine + 5-phospho-alpha-D-ribose 1-diphosphate. The catalysed reaction is IMP + diphosphate = hypoxanthine + 5-phospho-alpha-D-ribose 1-diphosphate. It participates in purine metabolism; GMP biosynthesis via salvage pathway; GMP from guanine: step 1/1. Its pathway is purine metabolism; XMP biosynthesis via salvage pathway; XMP from xanthine: step 1/1. Its function is as follows. Purine salvage pathway enzyme that catalyzes the transfer of the ribosyl-5-phosphate group from 5-phospho-alpha-D-ribose 1-diphosphate (PRPP) to the N9 position of the 6-oxopurines guanine and xanthine to form the corresponding ribonucleotides GMP (guanosine 5'-monophosphate) and XMP (xanthosine 5'-monophosphate), with the release of PPi. To a lesser extent, also acts on hypoxanthine. This is Xanthine-guanine phosphoribosyltransferase from Nitratidesulfovibrio vulgaris (strain DP4) (Desulfovibrio vulgaris).